A 481-amino-acid chain; its full sequence is Beta-1,3-glucan-binding protein (481 aa).

The signal sequence occupies residues 1–18 (RCARVCAVLFLFIQISYG). One can recognise a CBM39 domain in the interval 20-120 (YQVPQVTVQA…LSFTVSALED (101 aa)). N-linked (GlcNAc...) asparagine glycosylation occurs at Asn110. A GH16 domain is found at 124-481 (TGTGTDPVPT…LVDYVKVVAL (358 aa)).

Belongs to the insect beta-1,3-glucan binding protein family.

Its subcellular location is the secreted. In terms of biological role, involved in the recognition of invading microorganisms. Binds specifically to beta-1,3-glucan and activates the phenoloxidase cascade. This Hyphantria cunea (Fall webworm moth) protein is Beta-1,3-glucan-binding protein.